The chain runs to 899 residues: Protein translocase subunit SecA (899 aa).

Residues Gln87, 105-109, and Asp516 contribute to the ATP site; that span reads GEGKT. Zn(2+) is bound by residues Cys884, Cys886, Cys895, and His896.

Belongs to the SecA family. In terms of assembly, monomer and homodimer. Part of the essential Sec protein translocation apparatus which comprises SecA, SecYEG and auxiliary proteins SecDF. Other proteins may also be involved. Zn(2+) serves as cofactor.

Its subcellular location is the cell inner membrane. It localises to the cytoplasm. It carries out the reaction ATP + H2O + cellular proteinSide 1 = ADP + phosphate + cellular proteinSide 2.. Functionally, part of the Sec protein translocase complex. Interacts with the SecYEG preprotein conducting channel. Has a central role in coupling the hydrolysis of ATP to the transfer of proteins into and across the cell membrane, serving as an ATP-driven molecular motor driving the stepwise translocation of polypeptide chains across the membrane. The protein is Protein translocase subunit SecA of Borreliella afzelii (strain PKo) (Borrelia afzelii).